The primary structure comprises 275 residues: Protein CIMAP1C (275 aa).

STPGR repeat units follow at residues 200 to 225 (PGPA…MAKR) and 236 to 261 (PGPG…MGIK).

This sequence belongs to the CIMAP family.

This is Protein CIMAP1C (CIMAP1C) from Mus musculus (Mouse).